Reading from the N-terminus, the 123-residue chain is uncharacterized protein (123 aa).

Transmembrane regions (helical) follow at residues Met1–Cys21 and Leu103–Phe123.

It is found in the membrane. This is an uncharacterized protein from Saccharomyces cerevisiae (strain ATCC 204508 / S288c) (Baker's yeast).